Here is a 264-residue protein sequence, read N- to C-terminus: Myozenin-2 (264 aa).

Arginine 53 is modified (omega-N-methylarginine). The tract at residues 98 to 134 (ESGSQQAPFTPPNTPDPRSPPNPENIAPGYSGPLKEI) is disordered. Serine 101 is modified (phosphoserine). Residues 106 to 120 (FTPPNTPDPRSPPNP) are compositionally biased toward pro residues. Phosphothreonine occurs at positions 107 and 111. Serine 116 carries the phosphoserine modification.

The protein belongs to the myozenin family. As to quaternary structure, interacts via its C-terminus with spectrin repeats 3 and 4 of ACTN2. Interacts with ACTN1, LDB3, MYOT and PPP3CA.

It localises to the cytoplasm. It is found in the myofibril. Its subcellular location is the sarcomere. The protein localises to the z line. Myozenins may serve as intracellular binding proteins involved in linking Z line proteins such as alpha-actinin, gamma-filamin, TCAP/telethonin, LDB3/ZASP and localizing calcineurin signaling to the sarcomere. Plays an important role in the modulation of calcineurin signaling. May play a role in myofibrillogenesis. In Bos taurus (Bovine), this protein is Myozenin-2 (MYOZ2).